The sequence spans 185 residues: Elongation factor P (185 aa).

This sequence belongs to the elongation factor P family.

The protein localises to the cytoplasm. The protein operates within protein biosynthesis; polypeptide chain elongation. In terms of biological role, involved in peptide bond synthesis. Stimulates efficient translation and peptide-bond synthesis on native or reconstituted 70S ribosomes in vitro. Probably functions indirectly by altering the affinity of the ribosome for aminoacyl-tRNA, thus increasing their reactivity as acceptors for peptidyl transferase. The protein is Elongation factor P of Geobacillus sp. (strain WCH70).